Reading from the N-terminus, the 351-residue chain is Histidinol-phosphate aminotransferase (351 aa).

Lysine 209 carries the post-translational modification N6-(pyridoxal phosphate)lysine.

It belongs to the class-II pyridoxal-phosphate-dependent aminotransferase family. Histidinol-phosphate aminotransferase subfamily. In terms of assembly, homodimer. Requires pyridoxal 5'-phosphate as cofactor.

It catalyses the reaction L-histidinol phosphate + 2-oxoglutarate = 3-(imidazol-4-yl)-2-oxopropyl phosphate + L-glutamate. It participates in amino-acid biosynthesis; L-histidine biosynthesis; L-histidine from 5-phospho-alpha-D-ribose 1-diphosphate: step 7/9. This Chromohalobacter salexigens (strain ATCC BAA-138 / DSM 3043 / CIP 106854 / NCIMB 13768 / 1H11) protein is Histidinol-phosphate aminotransferase.